Here is a 91-residue protein sequence, read N- to C-terminus: DNA-binding protein HRL18 (91 aa).

The protein belongs to the bacterial histone-like protein family.

Histone-like DNA-binding protein which is capable of wrapping DNA to stabilize it, and thus to prevent its denaturation under extreme environmental conditions. This is DNA-binding protein HRL18 from Rhizobium leguminosarum.